A 697-amino-acid chain; its full sequence is Putative cryptochrome DASH (697 aa).

In terms of domain architecture, Photolyase/cryptochrome alpha/beta spans 5–164; it reads KLLVYLLRRD…GFKLWHDEKY (160 aa). 2 disordered regions span residues 170 to 215 and 554 to 697; these read DNGL…FPSW and FSVT…PPHI. A compositionally biased stretch (basic and acidic residues) spans 188–198; it reads KTQEPLRERPR. Residues 560-569 are compositionally biased toward basic residues; that stretch reads RGNRRPYRWR. The span at 578–590 shows a compositional bias: gly residues; sequence GRGGRGGGTGNTS. Composition is skewed to low complexity over residues 659–675 and 683–697; these read QQQQQPQHQLQHYYAHQ and RQQQQQFYHQIPPHI.

The protein belongs to the DNA photolyase class-1 family. Requires FAD as cofactor. It depends on (6R)-5,10-methylene-5,6,7,8-tetrahydrofolate as a cofactor.

Functionally, may have a photoreceptor function. The protein is Putative cryptochrome DASH of Gibberella zeae (strain ATCC MYA-4620 / CBS 123657 / FGSC 9075 / NRRL 31084 / PH-1) (Wheat head blight fungus).